We begin with the raw amino-acid sequence, 2792 residues long: E3 ubiquitin-protein ligase UBR5 (2792 aa).

Threonine 2 is modified (N-acetylthreonine). Over residues 77–88 (DRLELGKPDNND) the composition is skewed to basic and acidic residues. The disordered stretch occupies residues 77-175 (DRLELGKPDN…DRGSGLLGSQ (99 aa)). Positions 94-111 (SSSGTGRTSRPGRTSDSP) are enriched in low complexity. Position 110 is a phosphoserine (serine 110). Gly residues predominate over residues 135-144 (GVGGSGGGSS). Residues 184–226 (VIPEELISQAQVVLQGKSRSVIIRELQRTNLDVNLAVNNLLSR) form the UBA domain. Position 321 is a phosphoserine (serine 321). Residues 322-341 (FDNERGSTSKEGESNPDKKN) show a composition bias toward basic and acidic residues. Positions 322-347 (FDNERGSTSKEGESNPDKKNTPVQSP) are disordered. A phosphoserine mark is found at serine 346 and serine 572. The span at 577-598 (KSMEKASKTLETKPESKQEPVK) shows a compositional bias: basic and acidic residues. The interval 577–642 (KSMEKASKTL…APREEEKVNE (66 aa)) is disordered. Serine 606 carries the post-translational modification Phosphoserine. Residues 608 to 622 (ASTCSDASSIASSAS) show a composition bias toward low complexity. Threonine 631 bears the Phosphothreonine mark. Phosphoserine occurs at positions 802, 922, and 1012. Disordered stretches follow at residues 993-1029 (AGLG…SMDP) and 1046-1069 (TAAT…EPSV). Positions 1011 to 1027 (VSPPIAPPSWVPDPPSM) are enriched in pro residues. Residues 1046–1067 (TAATGSGQGPSTSTIPGPSTEP) show a composition bias toward polar residues. Phosphothreonine is present on residues threonine 1109 and threonine 1129. A UBR-type zinc finger spans residues 1171-1239 (DTCSFTWTGA…EKCKCKTLIA (69 aa)). Serine 1221, serine 1302, serine 1349, serine 1369, and serine 1475 each carry phosphoserine. The tract at residues 1293-1312 (REDRNRKTASPEDSDMPDHD) is disordered. Residues 1509-1734 (SVEPLPPRPS…PSSTSTPAAS (226 aa)) are disordered. Residues 1518-1531 (SSDQASSSSQSQSS) show a composition bias toward low complexity. The segment covering 1532–1547 (YIIRNPQQRRISQSQP) has biased composition (polar residues). Serine 1543 carries the phosphoserine modification. Acidic residues-rich tracts occupy residues 1553 to 1568 (EEQD…EVEV) and 1599 to 1608 (HDEDGSDMEL). A compositionally biased stretch (polar residues) spans 1623–1632 (NHSNQDNASG). Low complexity-rich tracts occupy residues 1635–1651 (SVVT…ASSV), 1662–1675 (SNDS…SSQS), and 1720–1734 (AAST…PAAS). Residue threonine 1730 is modified to Phosphothreonine. Serine 1735 is modified (phosphoserine). Tyrosine 1740 is modified (phosphotyrosine). Serine 1774 is modified (phosphoserine). The tract at residues 1853 to 1884 (LASAGDPGHPNHPLHASQNSARRERMTAREEA) is disordered. Residues 1873 to 1884 (ARRERMTAREEA) show a composition bias toward basic and acidic residues. At threonine 1963 the chain carries Phosphothreonine. The segment at 1978-2015 (GIDNEDSEHENDDDTSQSATLNDKDDDSLPAETGQNHP) is disordered. Acidic residues predominate over residues 1979–1992 (IDNEDSEHENDDDT). A phosphoserine mark is found at serine 1984, serine 2020, and serine 2022. Threonine 2024 carries the post-translational modification Phosphothreonine. Position 2070 is a phosphoserine (serine 2070). The disordered stretch occupies residues 2111–2137 (RQKKEGEEQSLLAEEADSSKPGPSAPD). Threonine 2207 is subject to Phosphothreonine. Serine 2235 and serine 2283 each carry phosphoserine. Positions 2317–2387 (HTSLMQRLRN…SDDPDPLPAH (71 aa)) are disordered. Composition is skewed to basic and acidic residues over residues 2326–2342 (NRGE…EMRR) and 2350–2362 (SRRD…RRQL). One can recognise a PABC domain in the interval 2371–2448 (PASEGNPSDD…AMELIIAHGR (78 aa)). In terms of domain architecture, HECT spans 2455–2792 (ILDLGLLDSS…AIKTKNFGFV (338 aa)). Phosphoserine occurs at positions 2463, 2477, and 2479. A disordered region spans residues 2467–2494 (VQENRKRHGSSRSVVDMDLEDTDDGDDN). The segment covering 2483–2493 (MDLEDTDDGDD) has biased composition (acidic residues). The active-site Glycyl thioester intermediate is cysteine 2761.

Belongs to the UBR5 family. In terms of assembly, homotetramer; composed of a dimer of dimers. Associates with CDK9 and TFIIS/TCEA1 and forms a transcription regulatory complex made of CDK9, RNAP II, UBR5 and TFIIS/TCEA1 that can stimulate target gene transcription (e.g. gamma fibrinogen/FGG) by recruiting their promoters. Associates with the E3 ligase complex containing DYRK2, EDD/UBR5, DDB1 and DCAF1 proteins (EDVP complex). Binds TOPBP1. Interacts with PIH1D1. Interacts with CIB1.

The protein localises to the nucleus. The protein resides in the cytoplasm. The catalysed reaction is S-ubiquitinyl-[E2 ubiquitin-conjugating enzyme]-L-cysteine + [acceptor protein]-L-lysine = [E2 ubiquitin-conjugating enzyme]-L-cysteine + N(6)-ubiquitinyl-[acceptor protein]-L-lysine.. The protein operates within protein modification; protein ubiquitination. In terms of biological role, E3 ubiquitin-protein ligase involved in different protein quality control pathways in the cytoplasm and nucleus. Mainly acts as a ubiquitin chain elongator that extends pre-ubiquitinated substrates. Component of the N-end rule pathway: ubiquitinates proteins bearing specific N-terminal residues that are destabilizing according to the N-end rule, leading to their degradation. Recognizes type-1 N-degrons, containing positively charged amino acids (Arg, Lys and His). Together with UBR4, part of a cytoplasm protein quality control pathway that prevents protein aggregation by catalyzing assembly of heterotypic 'Lys-11'-/'Lys-48'-linked branched ubiquitin chains on aggregated proteins, leading to substrate recognition by the segregase p97/VCP and degradation by the proteasome: UBR5 is probably branching multiple 'Lys-48'-linked chains of substrates initially modified with mixed conjugates by UBR4. Together with ITCH, catalyzes 'Lys-48'-/'Lys-63'-branched ubiquitination of TXNIP, leading to its degradation: UBR5 mediates branching of 'Lys-48'-linked chains of substrates initially modified with 'Lys-63'-linked conjugates by ITCH. Catalytic component of a nuclear protein quality control pathway that mediates ubiquitination and degradation of unpaired transcription factors (i.e. transcription factors that are not assembled into functional multiprotein complexes): specifically recognizes and binds degrons that are not accessible when transcription regulators are associated with their coactivators. Ubiquitinates various unpaired transcription regulator (MYC, SUPT4H1, SUPT5H, CDC20 and MCRS1), as well as ligand-bound nuclear receptors (ESR1, NR1H3, NR3C1, PGR, RARA, RXRA AND VDR) that are not associated with their nuclear receptor coactivators (NCOAs). Involved in maturation and/or transcriptional regulation of mRNA by mediating polyubiquitination and activation of CDK9. Also acts as a regulator of DNA damage response by acting as a suppressor of RNF168, an E3 ubiquitin-protein ligase that promotes accumulation of 'Lys-63'-linked histone H2A and H2AX at DNA damage sites, thereby acting as a guard against excessive spreading of ubiquitinated chromatin at damaged chromosomes. Regulates DNA topoisomerase II binding protein (TopBP1) in the DNA damage response. Ubiquitinates acetylated PCK1. Acts as a positive regulator of the canonical Wnt signaling pathway by mediating (1) ubiquitination and stabilization of CTNNB1, and (2) 'Lys-48'-linked ubiquitination and degradation of TLE3. Promotes disassembly of the mitotic checkpoint complex (MCC) from the APC/C complex by catalyzing ubiquitination of BUB1B, BUB3 and CDC20. Plays an essential role in extraembryonic development. Required for the maintenance of skeletal tissue homeostasis by acting as an inhibitor of hedgehog (HH) signaling. The protein is E3 ubiquitin-protein ligase UBR5 of Mus musculus (Mouse).